The chain runs to 319 residues: Cobalamin biosynthesis protein CobD (319 aa).

Helical transmembrane passes span Val-54 to Tyr-76, Gly-154 to Tyr-173, and Val-301 to Ile-318.

It belongs to the CobD/CbiB family.

The protein localises to the cell membrane. It functions in the pathway cofactor biosynthesis; adenosylcobalamin biosynthesis. Its function is as follows. Converts cobyric acid to cobinamide by the addition of aminopropanol on the F carboxylic group. The polypeptide is Cobalamin biosynthesis protein CobD (Halalkalibacterium halodurans (strain ATCC BAA-125 / DSM 18197 / FERM 7344 / JCM 9153 / C-125) (Bacillus halodurans)).